A 236-amino-acid polypeptide reads, in one-letter code: Small ribosomal subunit protein uS2c (236 aa).

This sequence belongs to the universal ribosomal protein uS2 family.

The protein localises to the plastid. Its subcellular location is the chloroplast. The protein is Small ribosomal subunit protein uS2c (rps2) of Ipomoea purpurea (Common morning glory).